The primary structure comprises 298 residues: Riboflavin transporter (298 aa).

9 consecutive transmembrane segments (helical) span residues 8–28, 35–55, 79–99, 101–121, 125–145, 151–171, 184–204, 211–231, and 258–278; these read LQGALWMLTAGLAFAIVNSVA, FGLPSTTVALVQYAIAIVVIL, VFLAVIGIQLWLWALAYPVPI, QGIALLMTSPLFATIGSGLWL, VGMARWVATLTGFIGAMIILE, FNLASLLPVGAAFFWASYSLM, MVVYLLLLITPFNLLLALPDW, TVWLLLIGAGVMTALAQWAIA, and WLVFGWVPPGRLWLGAAIIVL. EamA domains follow at residues 10–144 and 156–284; these read GALW…MIIL and LLPV…AFIT.

Belongs to the drug/metabolite transporter (DMT) superfamily. 10 TMS drug/metabolite exporter (DME) (TC 2.A.7.3) family.

Its subcellular location is the cell membrane. Its function is as follows. Transports riboflavin into the cell. The protein is Riboflavin transporter of Vibrio cholerae serotype O1 (strain ATCC 39315 / El Tor Inaba N16961).